Consider the following 214-residue polypeptide: 3-demethoxyubiquinol 3-hydroxylase (214 aa).

The Fe cation site is built by glutamate 63, glutamate 93, histidine 96, glutamate 145, glutamate 177, and histidine 180.

It belongs to the COQ7 family. It depends on Fe cation as a cofactor.

Its subcellular location is the cell membrane. It catalyses the reaction a 5-methoxy-2-methyl-3-(all-trans-polyprenyl)benzene-1,4-diol + AH2 + O2 = a 3-demethylubiquinol + A + H2O. It participates in cofactor biosynthesis; ubiquinone biosynthesis. In terms of biological role, catalyzes the hydroxylation of 2-nonaprenyl-3-methyl-6-methoxy-1,4-benzoquinol during ubiquinone biosynthesis. The polypeptide is 3-demethoxyubiquinol 3-hydroxylase (Psychrobacter cryohalolentis (strain ATCC BAA-1226 / DSM 17306 / VKM B-2378 / K5)).